Reading from the N-terminus, the 103-residue chain is Small ribosomal subunit protein uS10 (103 aa).

It belongs to the universal ribosomal protein uS10 family. Part of the 30S ribosomal subunit.

Involved in the binding of tRNA to the ribosomes. The sequence is that of Small ribosomal subunit protein uS10 from Dechloromonas aromatica (strain RCB).